We begin with the raw amino-acid sequence, 414 residues long: tRNA N6-adenosine threonylcarbamoyltransferase, mitochondrial (414 aa).

The transit peptide at 1–29 (MLMLSKTAGAIPRPPRSNVRGFIRRFNVQ) directs the protein to the mitochondrion. Lys-74 and Lys-140 each carry N6-acetyllysine. A divalent metal cation-binding residues include His-147 and His-151. Substrate is bound by residues 169-173 (LISGG) and Asp-202. Residue Lys-203 is modified to N6-acetyllysine. Positions 222 and 226 each coordinate substrate. Lys-230 and Lys-299 each carry N6-acetyllysine. Substrate is bound by residues 329–330 (SN) and Thr-357. Asp-358 lines the a divalent metal cation pocket.

It belongs to the KAE1 / TsaD family. As to quaternary structure, monomer. A divalent metal cation serves as cofactor.

The protein localises to the mitochondrion. The enzyme catalyses L-threonylcarbamoyladenylate + adenosine(37) in tRNA = N(6)-L-threonylcarbamoyladenosine(37) in tRNA + AMP + H(+). In terms of biological role, required for the formation of a threonylcarbamoyl group on adenosine at position 37 (t(6)A37) in mitochondrial tRNAs that read codons beginning with adenine. Probably involved in the transfer of the threonylcarbamoyl moiety of threonylcarbamoyl-AMP (TC-AMP) to the N6 group of A37. Involved in mitochondrial genome maintenance. The polypeptide is tRNA N6-adenosine threonylcarbamoyltransferase, mitochondrial (Rattus norvegicus (Rat)).